Reading from the N-terminus, the 433-residue chain is Indole diterpene prenyltransferase terF (433 aa).

Belongs to the tryptophan dimethylallyltransferase family.

The protein operates within secondary metabolite biosynthesis. Its function is as follows. Indole diterpene prenyltransferase; part of the gene cluster that mediates the biosynthesis of terpendoles, indole-diterpene (IDT) mycotoxins including terpendole I, terpendole K, terpendole C, as well as the kinesin Eg5 inhibitor terpendole E. Terpendoles biosynthesis begins with the synthesis of geranylgeranyl diphosphate (GGPP) by a yet unidentified GGPP synthase. Condensation of indole-3-glycerol phosphate with GGPP by the prenyltransferase terC then forms 3-geranylgeranylindole (3-GGI), followed by epoxidation and cyclization of this intermediate (by the FAD-dependent monooxygeanse terM and the terpene cyclase terB) to form paspaline. The cytochrome monooxygenase terQ then hydroxylates paspalline at C-11 to yield terpendole E. The cytochrome monooxygenase terP converts terpendole E to 13-desoxyterpendole I, and terQ converts 13-desoxyterpendole I into terpendole I. TerF and terK are required for conversion of terpendole I to terpendole C which is further converted to terpendole K. This chain is Indole diterpene prenyltransferase terF, found in Tolypocladium album (Soil fungus).